The chain runs to 330 residues: MTITTTVKAKTLAVNNKNAPHTSATMHPRNVHRNGYPMSALCQSYPTLEAHVIKAKSGQQSIDFSKAASVKALNAALLIHYYGLNMWDIPEGYLCPPVPGRADYIHGLADLLAKDNKGVVPTGNRVIGLDIGVGANAIYPIIGSQTYGWDFVGSDIDDVALKSATTLANNNPKLKPLLAVRKQHDKAYIFAGIIQPDDHFTFSLCNPPFHKSAEEAAMGSLRKVKGLGRNKQKSNNTGNAQPITANKLNFAGQSNELWCDGGELAFIQRMIKESVEYQSQVGWFTCLVSKSLHLKAIETSARYFGAKQFMKVDMGQGQKISRFVAWKFRD.

Belongs to the methyltransferase superfamily. METTL16/RlmF family.

It localises to the cytoplasm. The enzyme catalyses adenosine(1618) in 23S rRNA + S-adenosyl-L-methionine = N(6)-methyladenosine(1618) in 23S rRNA + S-adenosyl-L-homocysteine + H(+). Its function is as follows. Specifically methylates the adenine in position 1618 of 23S rRNA. The sequence is that of Ribosomal RNA large subunit methyltransferase F from Pseudoalteromonas atlantica (strain T6c / ATCC BAA-1087).